Reading from the N-terminus, the 71-residue chain is Long neurotoxin 1 (71 aa).

5 cysteine pairs are disulfide-bonded: Cys3–Cys21, Cys14–Cys42, Cys27–Cys31, Cys46–Cys57, and Cys58–Cys63.

This sequence belongs to the three-finger toxin family. Long-chain subfamily. Type II alpha-neurotoxin sub-subfamily. Expressed by the venom gland.

It localises to the secreted. Functionally, binds with high affinity to muscular (alpha-1/CHRNA1) and neuronal (alpha-7/CHRNA7) nicotinic acetylcholine receptor (nAChR) and inhibits acetylcholine from binding to the receptor, thereby impairing neuromuscular and neuronal transmission. The chain is Long neurotoxin 1 from Naja melanoleuca (Forest cobra).